The primary structure comprises 1342 residues: DNA-directed RNA polymerase subunit beta (1342 aa).

It belongs to the RNA polymerase beta chain family. In terms of assembly, the RNAP catalytic core consists of 2 alpha, 1 beta, 1 beta' and 1 omega subunit. When a sigma factor is associated with the core the holoenzyme is formed, which can initiate transcription.

The catalysed reaction is RNA(n) + a ribonucleoside 5'-triphosphate = RNA(n+1) + diphosphate. In terms of biological role, DNA-dependent RNA polymerase catalyzes the transcription of DNA into RNA using the four ribonucleoside triphosphates as substrates. This chain is DNA-directed RNA polymerase subunit beta, found in Buchnera aphidicola subsp. Schizaphis graminum (strain Sg).